Reading from the N-terminus, the 343-residue chain is Holliday junction branch migration complex subunit RuvB (343 aa).

The interval 1–181 is large ATPase domain (RuvB-L); that stretch reads MDRIVEIEKV…FGMQFRLQFY (181 aa). ATP is bound by residues Leu20, Arg21, Gly62, Lys65, Thr66, Thr67, 128–130, Arg171, Tyr181, and Arg218; that span reads EDF. Thr66 is a binding site for Mg(2+). Residues 182–252 form a small ATPAse domain (RuvB-S) region; the sequence is TDNELARIIS…RAKSSLDSLG (71 aa). A head domain (RuvB-H) region spans residues 255–343; the sequence is DLGFDEMDLK…EKQNKGLFNE (89 aa). DNA contacts are provided by Arg308 and Arg313.

This sequence belongs to the RuvB family. As to quaternary structure, homohexamer. Forms an RuvA(8)-RuvB(12)-Holliday junction (HJ) complex. HJ DNA is sandwiched between 2 RuvA tetramers; dsDNA enters through RuvA and exits via RuvB. An RuvB hexamer assembles on each DNA strand where it exits the tetramer. Each RuvB hexamer is contacted by two RuvA subunits (via domain III) on 2 adjacent RuvB subunits; this complex drives branch migration. In the full resolvosome a probable DNA-RuvA(4)-RuvB(12)-RuvC(2) complex forms which resolves the HJ.

The protein resides in the cytoplasm. The catalysed reaction is ATP + H2O = ADP + phosphate + H(+). Its function is as follows. The RuvA-RuvB-RuvC complex processes Holliday junction (HJ) DNA during genetic recombination and DNA repair, while the RuvA-RuvB complex plays an important role in the rescue of blocked DNA replication forks via replication fork reversal (RFR). RuvA specifically binds to HJ cruciform DNA, conferring on it an open structure. The RuvB hexamer acts as an ATP-dependent pump, pulling dsDNA into and through the RuvAB complex. RuvB forms 2 homohexamers on either side of HJ DNA bound by 1 or 2 RuvA tetramers; 4 subunits per hexamer contact DNA at a time. Coordinated motions by a converter formed by DNA-disengaged RuvB subunits stimulates ATP hydrolysis and nucleotide exchange. Immobilization of the converter enables RuvB to convert the ATP-contained energy into a lever motion, pulling 2 nucleotides of DNA out of the RuvA tetramer per ATP hydrolyzed, thus driving DNA branch migration. The RuvB motors rotate together with the DNA substrate, which together with the progressing nucleotide cycle form the mechanistic basis for DNA recombination by continuous HJ branch migration. Branch migration allows RuvC to scan DNA until it finds its consensus sequence, where it cleaves and resolves cruciform DNA. The polypeptide is Holliday junction branch migration complex subunit RuvB (Campylobacter fetus subsp. fetus (strain 82-40)).